A 1490-amino-acid chain; its full sequence is Leucine-rich repeat-containing protein 7 (1490 aa).

LRR repeat units follow at residues 23-44 (IISVLDYSHCSLQQVPKEVFNF), 47-68 (TLEELYLDANQIEELPKQLFNC), 70-91 (ALRKLSIPDNDLSSLPTSIASL), 93-114 (NLKELDISKNGVQEFPENIKCC), 116-137 (CLTIIEASVNPISKLPDGFTQL), 139-161 (NLTQLYLNDAFLEFLPANFGRLV), 162-183 (KLRILELRENHLKTLPKSMHKL), 185-206 (QLERLDLGNNEFSELPEVLDQI), 208-229 (NLRELWMDNNALQVLPGSIGKL), 231-253 (MLVYLDMSKNRIETVDMDISGCE), 254-275 (ALEDLLLSSNMLQQLPDSIGLL), 277-298 (KLTTLKVDDNQLTMLPNTIGNL), 300-321 (LLEEFDCSCNELESLPPTIGYL), 323-344 (SLRTLAVDENFLPELPREIGSC), 346-367 (NVTVMSLRSNKLEFLPEEIGQM), 369-391 (RLRVLNLSDNRLKNLPFSFTKLK), and 392-413 (ELAALWLSDNQSKALIPLQTEA). A phosphoserine mark is found at Ser439, Ser441, and Ser443. The span at 663 to 676 (KKESTDESEVDKTH) shows a compositional bias: basic and acidic residues. Disordered regions lie at residues 663–704 (KKES…NTRM), 785–807 (AGENANNNPLLSSKARSVPAHGR), and 822–899 (ELEQ…YHDP). Polar residues predominate over residues 677-686 (CLNNSVSSGT). Low complexity predominate over residues 687–700 (YSDYSPSQASSASS). A Phosphothreonine modification is found at Thr831. Position 850 is a phosphoserine (Ser850). The segment covering 859–871 (PSKLETTPTTSPL) has biased composition (low complexity). Position 865 is a phosphothreonine (Thr865). Ser869 is subject to Phosphoserine. Residues 872 to 882 (PERKDHMKEPT) are compositionally biased toward basic and acidic residues. 3 positions are modified to phosphoserine: Ser947, Ser949, and Ser1118. The segment covering 1134-1144 (PHELPPGDRYG) has biased composition (basic and acidic residues). Disordered regions lie at residues 1134 to 1158 (PHELPPGDRYGRATYRGGLEGQSSI) and 1196 to 1218 (QRRPLSARSYSTESYGASQTRPV). Omega-N-methylarginine is present on Arg1149. Over residues 1196 to 1217 (QRRPLSARSYSTESYGASQTRP) the composition is skewed to polar residues. Ser1233 carries the post-translational modification Phosphoserine. 2 disordered regions span residues 1238–1265 (GNYGDKTSDNSDIKTRPTPVKGEESCGK) and 1282–1312 (RLDRTPSQQSNILDNGQEDVSPSGQWNPYPL). Basic and acidic residues predominate over residues 1243–1263 (KTSDNSDIKTRPTPVKGEESC). Residues 1286-1307 (TPSQQSNILDNGQEDVSPSGQW) show a composition bias toward polar residues. 2 positions are modified to phosphoserine: Ser1288 and Ser1392. Positions 1398-1488 (EQFCVRIEKN…TVDLVIQREL (91 aa)) constitute a PDZ domain.

Belongs to the LAP (LRR and PDZ) protein family. Interacts with CNKSR2 and DLG4. Interacts with CTNND2/Catenin delta-2. Forms a complex with N-cadherin through CTNND2. Interacts with CAMK2A. In terms of tissue distribution, expressed in brain (at protein level).

It localises to the cytoplasm. The protein localises to the postsynaptic density. In terms of biological role, required for normal synaptic spine architecture and function. Necessary for DISC1 and GRM5 localization to postsynaptic density complexes and for both N-methyl D-aspartate receptor-dependent and metabotropic glutamate receptor-dependent long term depression. The chain is Leucine-rich repeat-containing protein 7 (Lrrc7) from Mus musculus (Mouse).